We begin with the raw amino-acid sequence, 181 residues long: ATP-dependent protease subunit HslV (181 aa).

Residue Thr7 is part of the active site. Na(+) contacts are provided by Ala162, Cys165, and Thr168.

The protein belongs to the peptidase T1B family. HslV subfamily. A double ring-shaped homohexamer of HslV is capped on each side by a ring-shaped HslU homohexamer. The assembly of the HslU/HslV complex is dependent on binding of ATP.

The protein localises to the cytoplasm. It catalyses the reaction ATP-dependent cleavage of peptide bonds with broad specificity.. Its activity is regulated as follows. Allosterically activated by HslU binding. Its function is as follows. Protease subunit of a proteasome-like degradation complex believed to be a general protein degrading machinery. This chain is ATP-dependent protease subunit HslV, found in Coxiella burnetii (strain RSA 331 / Henzerling II).